Here is a 226-residue protein sequence, read N- to C-terminus: UPF0173 metal-dependent hydrolase Msed_2125 (226 aa).

This sequence belongs to the UPF0173 family.

This chain is UPF0173 metal-dependent hydrolase Msed_2125, found in Metallosphaera sedula (strain ATCC 51363 / DSM 5348 / JCM 9185 / NBRC 15509 / TH2).